The sequence spans 100 residues: Urease subunit gamma (100 aa).

The protein belongs to the urease gamma subunit family. Heterotrimer of UreA (gamma), UreB (beta) and UreC (alpha) subunits. Three heterotrimers associate to form the active enzyme.

The protein localises to the cytoplasm. The catalysed reaction is urea + 2 H2O + H(+) = hydrogencarbonate + 2 NH4(+). The protein operates within nitrogen metabolism; urea degradation; CO(2) and NH(3) from urea (urease route): step 1/1. The sequence is that of Urease subunit gamma from Prochlorococcus marinus (strain MIT 9215).